A 438-amino-acid chain; its full sequence is Battenin (438 aa).

The segment at 1–25 (MGGCAGSRRRLSDSEGEETVPEPRL) is disordered. Topologically, residues 1 to 37 (MGGCAGSRRRLSDSEGEETVPEPRLPLLDHQGAHWKN) are cytoplasmic. 2 positions are modified to phosphoserine: serine 12 and serine 14. The helical transmembrane segment at 38-58 (AVGFWLLGLCNNFSYVVMLSA) threads the bilayer. Residues 59–127 (AHDILSHERT…GLHLLPYSPR (69 aa)) lie on the Lumenal side of the membrane. N-linked (GlcNAc...) asparagine glycans are attached at residues asparagine 71 and asparagine 85. Residues 128 to 148 (VLVSGICAAGSFVLVAFSHSV) traverse the membrane as a helical segment. The Cytoplasmic segment spans residues 149-151 (GTS). The chain crosses the membrane as a helical span at residues 152–172 (LCGVVLASISSGLGEVTFLSL). Residues 173 to 182 (TAFYPRAVIS) are Lumenal-facing. Residues 183–203 (WWSSGTGGAGLLGALSYLGLT) traverse the membrane as a helical segment. Topologically, residues 204-277 (QAGLSPQQTL…SLSLRERWTV (74 aa)) are cytoplasmic. The disordered stretch occupies residues 237–268 (QDPGGEEEAESSARQPLIRTEAPESKPGSSSS). The short motif at 242–244 (EEE) is the Lysosomal targeting motif element. A Lysosomal targeting motif. Required for AP1G1, AP2A2 and AP3D1 interaction motif is present at residues 253–254 (LI). A helical transmembrane segment spans residues 278–298 (FKGLLWYIVPLVVVYFAEYFI). Topologically, residues 299–346 (NQGLFELLFFRNTSLSHAQQYRWYQMLYQAGVFASRSSLRCCHIRFTW) are lumenal. A glycan (N-linked (GlcNAc...) asparagine) is linked at asparagine 310. Residues 347–367 (ALALLQCLNLAFLLADVWFGF) form a helical membrane-spanning segment. At 368–438 (LLSIYFVFLI…PLHDFLCQLS (71 aa)) the chain is on the cytoplasmic side. A Lysosomal targeting motif motif is present at residues 409-419 (MATTCISDTLG). A Cysteine methyl ester modification is found at cysteine 435. Cysteine 435 carries S-farnesyl cysteine lipidation. Residues 436 to 438 (QLS) constitute a propeptide, removed in mature form.

The protein belongs to the battenin family. As to quaternary structure, interacts with DCTN1, KIF3A, RAB7A and RILP. Interacts with CLN5. Highly glycosylated. Post-translationally, farnesylation is important for trafficking to lysosomes.

The protein resides in the lysosome membrane. Its subcellular location is the late endosome. It localises to the lysosome. In terms of biological role, mediates microtubule-dependent, anterograde transport connecting the Golgi network, endosomes, autophagosomes, lysosomes and plasma membrane, and participates in several cellular processes such as regulation of lysosomal pH, lysosome protein degradation, receptor-mediated endocytosis, autophagy, transport of proteins and lipids from the TGN, apoptosis and synaptic transmission. Facilitates the proteins transport from trans-Golgi network (TGN)-to other membrane compartments such as transport of microdomain-associated proteins to the plasma membrane, IGF2R transport to the lysosome where it regulates the CTSD release leading to regulation of CTSD maturation and thereby APP intracellular processing. Moreover regulates CTSD activity in response to osmotic stress. Also binds galactosylceramide and transports it from the trans Golgi to the rafts, which may have immediate and downstream effects on cell survival by modulating ceramide synthesis. At the plasma membrane, regulates actin-dependent events including filopodia formation, cell migration, and pinocytosis through ARF1-CDC42 pathway and also the cytoskeleton organization through interaction with MYH10 and fodrin leading to the regulation of the plasma membrane association of Na+, K+ ATPase complex. Regulates synaptic transmission in the amygdala, hippocampus, and cerebellum through regulation of synaptic vesicles density and their proximity to active zones leading to modulation of short-term plasticity and age-dependent anxious behavior, learning and memory. Regulates autophagic vacuoles (AVs) maturation by modulating the trafficking between endocytic and autophagolysosomal/lysosomal compartments, which involves vesicle fusion leading to regulation of degradation process. Also participates in cellular homeostasis of compounds such as, water, ions, amino acids, proteins and lipids in several tissue namely in brain and kidney through regulation of their transport and synthesis. The polypeptide is Battenin (Macaca fascicularis (Crab-eating macaque)).